A 121-amino-acid polypeptide reads, in one-letter code: Large ribosomal subunit protein bL12 (121 aa).

The protein belongs to the bacterial ribosomal protein bL12 family. In terms of assembly, homodimer. Part of the ribosomal stalk of the 50S ribosomal subunit. Forms a multimeric L10(L12)X complex, where L10 forms an elongated spine to which 2 to 4 L12 dimers bind in a sequential fashion. Binds GTP-bound translation factors.

In terms of biological role, forms part of the ribosomal stalk which helps the ribosome interact with GTP-bound translation factors. Is thus essential for accurate translation. The polypeptide is Large ribosomal subunit protein bL12 (Alkaliphilus oremlandii (strain OhILAs) (Clostridium oremlandii (strain OhILAs))).